The primary structure comprises 1020 residues: MKMPLLVSHLLLISLTSCLGDFTWHRRYGHGVSEEDKGFGPIFEEQPINTIYPEESLEGKVSLNCRARASPFPVYKWRMNNGDVDLTNDRYSMVGGNLVINNPDKQKDAGVYYCLASNNYGMVRSTEATLSFGYLDPFPPEERPEVKVKEGKGMVLLCDPPYHFPDDLSYRWLLNEFPVFITMDKRRFVSQTNGNLYIANVESSDRGNYSCFVSSPSITKSVFSKFIPLIPIPERTTKPYPADIVVQFKDIYTMMGQNVTLECFALGNPVPDIRWRKVLEPMPSTAEISTSGAVLKIFNIQLEDEGLYECEAENIRGKDKHQARIYVQAFPEWVEHINDTEVDIGSDLYWPCIATGKPIPTIRWLKNGYSYHKGELRLYDVTFENAGMYQCIAENAYGSIYANAELKILALAPTFEMNPMKKKILAAKGGRVIIECKPKAAPKPKFSWSKGTEWLVNSSRILIWEDGSLEINNITRNDGGIYTCFAENNRGKANSTGTLVITNPTRIILAPINADITVGENATMQCAASFDPALDLTFVWSFNGYVIDFNKEITHIHYQRNFMLDANGELLIRNAQLKHAGRYTCTAQTIVDNSSASADLVVRGPPGPPGGLRIEDIRATSVALTWSRGSDNHSPISKYTIQTKTILSDDWKDAKTDPPIIEGNMESAKAVDLIPWMEYEFRVVATNTLGTGEPSIPSNRIKTDGAAPNVAPSDVGGGGGTNRELTITWAPLSREYHYGNNFGYIVAFKPFDGEEWKKVTVTNPDTGRYVHKDETMTPSTAFQVKVKAFNNKGDGPYSLVAVINSAQDAPSEAPTEVGVKVLSSSEISVHWKHVLEKIVESYQIRYWAGHDKEAAAHRVQVTSQEYSARLENLLPDTQYFIEVGACNSAGCGPSSDVIETFTRKAPPSQPPRIISSVRSGSRYIITWDHVVALSNESTVTGYKILYRPDGQHDGKLFSTHKHSIEVPIPRDGEYVVEVRAHSDGGDGVVSQVKISGVSTLSSSLLSLLLPSLGFLVYSEF.

A signal peptide spans methionine 1–glycine 20. 6 consecutive Ig-like C2-type domains span residues proline 41–serine 131, proline 137–phenylalanine 223, proline 241–tyrosine 326, proline 331–lysine 407, proline 413–valine 500, and proline 504–arginine 603. 2 disulfides stabilise this stretch: cysteine 65-cysteine 114 and cysteine 158-cysteine 211. N-linked (GlcNAc...) asparagine glycans are attached at residues asparagine 208 and asparagine 258. A disulfide bridge links cysteine 263 with cysteine 310. An N-linked (GlcNAc...) asparagine glycan is attached at asparagine 338. Intrachain disulfides connect cysteine 352-cysteine 391 and cysteine 436-cysteine 484. 4 N-linked (GlcNAc...) asparagine glycosylation sites follow: asparagine 457, asparagine 473, asparagine 494, and asparagine 521. An intrachain disulfide couples cysteine 526 to cysteine 585. The N-linked (GlcNAc...) asparagine glycan is linked to asparagine 593. Fibronectin type-III domains follow at residues proline 608–alanine 706, alanine 711–aspartate 808, alanine 813–serine 908, and glutamine 909–serine 1002. Positions serine 695 to glycine 719 are disordered. The N-linked (GlcNAc...) asparagine glycan is linked to asparagine 935. The GPI-anchor amidated serine moiety is linked to residue serine 1001. Positions serine 1002–phenylalanine 1020 are cleaved as a propeptide — removed in mature form.

It belongs to the immunoglobulin superfamily. Contactin family. In terms of assembly, monomer. Interacts with CNTNAP1 in cis form. Binds to the carbonic-anhydrase like domain of PTPRZ1. Interacts with NOTCH1 and TNR. Detected in a complex with NRCAM and PTPRB. Interacts with TASOR. Expressed in the ovary and in Sertoli cells of the testis.

The protein localises to the cell membrane. Contactins mediate cell surface interactions during nervous system development. Involved in the formation of paranodal axo-glial junctions in myelinated peripheral nerves and in the signaling between axons and myelinating glial cells via its association with CNTNAP1. Participates in oligodendrocytes generation by acting as a ligand of NOTCH1. Its association with NOTCH1 promotes NOTCH1 activation through the released notch intracellular domain (NICD) and subsequent translocation to the nucleus. Interaction with TNR induces a repulsion of neurons and an inhibition of neurite outgrowth. The protein is Contactin-1 (Cntn1) of Mus musculus (Mouse).